Here is a 143-residue protein sequence, read N- to C-terminus: NADH-quinone oxidoreductase subunit A (143 aa).

The next 3 helical transmembrane spans lie at 8 to 28 (FGNVFAFLALGIVFVAGGYLT), 63 to 83 (FYVVALIFIIFDVEVVFLYPW), and 90 to 110 (LGVFALVEVLVFAGILILGLV).

This sequence belongs to the complex I subunit 3 family. As to quaternary structure, NDH-1 is composed of 14 different subunits. Subunits NuoA, H, J, K, L, M, N constitute the membrane sector of the complex.

Its subcellular location is the cell inner membrane. The enzyme catalyses a quinone + NADH + 5 H(+)(in) = a quinol + NAD(+) + 4 H(+)(out). NDH-1 shuttles electrons from NADH, via FMN and iron-sulfur (Fe-S) centers, to quinones in the respiratory chain. The immediate electron acceptor for the enzyme in this species is believed to be a menaquinone. Couples the redox reaction to proton translocation (for every two electrons transferred, four hydrogen ions are translocated across the cytoplasmic membrane), and thus conserves the redox energy in a proton gradient. This chain is NADH-quinone oxidoreductase subunit A, found in Chlorobium phaeobacteroides (strain DSM 266 / SMG 266 / 2430).